We begin with the raw amino-acid sequence, 130 residues long: Small ribosomal subunit protein uS11 (130 aa).

It belongs to the universal ribosomal protein uS11 family. Part of the 30S ribosomal subunit. Interacts with proteins S7 and S18. Binds to IF-3.

In terms of biological role, located on the platform of the 30S subunit, it bridges several disparate RNA helices of the 16S rRNA. Forms part of the Shine-Dalgarno cleft in the 70S ribosome. In Kosmotoga olearia (strain ATCC BAA-1733 / DSM 21960 / TBF 19.5.1), this protein is Small ribosomal subunit protein uS11.